Reading from the N-terminus, the 174-residue chain is Large ribosomal subunit protein bL17 (174 aa).

This sequence belongs to the bacterial ribosomal protein bL17 family. In terms of assembly, part of the 50S ribosomal subunit. Contacts protein L32.

This is Large ribosomal subunit protein bL17 from Ruminiclostridium cellulolyticum (strain ATCC 35319 / DSM 5812 / JCM 6584 / H10) (Clostridium cellulolyticum).